Consider the following 450-residue polypeptide: Tripartite motif-containing protein 77 (450 aa).

The RING-type zinc finger occupies 15–56 (CSICTDYLTDPVTICCGHRFCSPCLCLLWEDTLTPNCCPVCR). The B box-type zinc finger occupies 88–131 (SAMLICRRHQEIKNLICETDRSLLCFLCSQSPRHATHKHYMTRE). Zn(2+) contacts are provided by C93, H96, C115, and H121. Residues 269 to 450 (QLSAWTITGV…LRPFICHGSK (182 aa)) form the B30.2/SPRY domain.

Belongs to the TRIM/RBCC family.

The polypeptide is Tripartite motif-containing protein 77 (TRIM77) (Homo sapiens (Human)).